The primary structure comprises 214 residues: Somatotropin-A (214 aa).

An N-terminal signal peptide occupies residues Met1–Ala25. Disulfide bonds link Cys77–Cys187 and Cys204–Cys212.

Belongs to the somatotropin/prolactin family.

The protein resides in the secreted. Its function is as follows. Growth hormone plays an important role in growth control. The protein is Somatotropin-A (gh-a) of Xenopus laevis (African clawed frog).